We begin with the raw amino-acid sequence, 425 residues long: Formyl-CoA:oxalate CoA-transferase (425 aa).

Residues 17–18 (QS), Arg-38, 72–75 (LDTK), 96–98 (NFG), Arg-104, and 136–139 (KVYE) contribute to the CoA site. The active-site Nucleophile is Asp-168. 247–249 (GGQ) lines the substrate pocket.

This sequence belongs to the CoA-transferase III family. Frc subfamily. As to quaternary structure, homodimer.

It catalyses the reaction formyl-CoA + oxalate = oxalyl-CoA + formate. It functions in the pathway metabolic intermediate degradation; oxalate degradation; CO(2) and formate from oxalate: step 1/2. Functionally, involved in the catabolism of oxalate and in the adapatation to low pH via the induction of the oxalate-dependent acid tolerance response (ATR). Catalyzes the transfer of the CoA moiety from formyl-CoA to oxalate. This chain is Formyl-CoA:oxalate CoA-transferase, found in Rhodopseudomonas palustris (strain BisA53).